Here is a 393-residue protein sequence, read N- to C-terminus: Small RNA 2'-O-methyltransferase (393 aa).

3 residues coordinate S-adenosyl-L-methionine: S60, D78, and S114. The Mg(2+) site is built by E132, E135, H136, and H181. The segment at 283-309 is disordered; that stretch reads RVSHLPRRKEQDGEQGDKPKDIGGSKA. Basic and acidic residues predominate over residues 290-305; sequence RKEQDGEQGDKPKDIG.

It belongs to the methyltransferase superfamily. HEN1 family. Mg(2+) is required as a cofactor.

It is found in the cytoplasm. It catalyses the reaction small RNA 3'-end nucleotide + S-adenosyl-L-methionine = small RNA 3'-end 2'-O-methylnucleotide + S-adenosyl-L-homocysteine + H(+). Functionally, methyltransferase that adds a 2'-O-methyl group at the 3'-end of piRNAs, a class of 24 to 30 nucleotide RNAs that are generated by a Dicer-independent mechanism and are primarily derived from transposons and other repeated sequence elements. This probably protects the 3'-end of piRNAs from uridylation activity and subsequent degradation. Stabilization of piRNAs is essential for gametogenesis. In Macaca fascicularis (Crab-eating macaque), this protein is Small RNA 2'-O-methyltransferase (HENMT1).